We begin with the raw amino-acid sequence, 65 residues long: Large ribosomal subunit protein bL35 (65 aa).

This sequence belongs to the bacterial ribosomal protein bL35 family.

This chain is Large ribosomal subunit protein bL35, found in Acetivibrio thermocellus (strain ATCC 27405 / DSM 1237 / JCM 9322 / NBRC 103400 / NCIMB 10682 / NRRL B-4536 / VPI 7372) (Clostridium thermocellum).